A 321-amino-acid polypeptide reads, in one-letter code: Ubiquitin carboxyl-terminal hydrolase ubh-4 (321 aa).

The UCH catalytic domain maps to 6–220 (SWCLIESDPG…ITFNLMALVP (215 aa)). The Nucleophile role is filled by C83. The active-site Proton donor is the H158. The 29-residue stretch at 273–301 (NYTPFVIELMKILAKEGKLVGLVDNAYQA) folds into the ULD domain.

Belongs to the peptidase C12 family. Interacts with proteasome 19S subunit rpn-13. As to expression, highly expressed in intestine and to a lesser extent in other tissues including muscles and neurons.

The enzyme catalyses Thiol-dependent hydrolysis of ester, thioester, amide, peptide and isopeptide bonds formed by the C-terminal Gly of ubiquitin (a 76-residue protein attached to proteins as an intracellular targeting signal).. Ubiquitin-protein hydrolase involved both in the processing of ubiquitin precursors and of ubiquitinated proteins. This enzyme is a thiol protease that recognizes and hydrolyzes a peptide bond at the C-terminal glycine of ubiquitin. This is Ubiquitin carboxyl-terminal hydrolase ubh-4 from Caenorhabditis elegans.